A 168-amino-acid polypeptide reads, in one-letter code: Large ribosomal subunit protein uL10 (168 aa).

This sequence belongs to the universal ribosomal protein uL10 family. As to quaternary structure, part of the ribosomal stalk of the 50S ribosomal subunit. The N-terminus interacts with L11 and the large rRNA to form the base of the stalk. The C-terminus forms an elongated spine to which L12 dimers bind in a sequential fashion forming a multimeric L10(L12)X complex.

In terms of biological role, forms part of the ribosomal stalk, playing a central role in the interaction of the ribosome with GTP-bound translation factors. The protein is Large ribosomal subunit protein uL10 of Levilactobacillus brevis (strain ATCC 367 / BCRC 12310 / CIP 105137 / JCM 1170 / LMG 11437 / NCIMB 947 / NCTC 947) (Lactobacillus brevis).